We begin with the raw amino-acid sequence, 398 residues long: Tryptophan synthase beta chain (398 aa).

Lys-88 bears the N6-(pyridoxal phosphate)lysine mark.

It belongs to the TrpB family. Tetramer of two alpha and two beta chains. Pyridoxal 5'-phosphate is required as a cofactor.

The catalysed reaction is (1S,2R)-1-C-(indol-3-yl)glycerol 3-phosphate + L-serine = D-glyceraldehyde 3-phosphate + L-tryptophan + H2O. The protein operates within amino-acid biosynthesis; L-tryptophan biosynthesis; L-tryptophan from chorismate: step 5/5. The beta subunit is responsible for the synthesis of L-tryptophan from indole and L-serine. The polypeptide is Tryptophan synthase beta chain (Haemophilus influenzae (strain PittGG)).